A 186-amino-acid polypeptide reads, in one-letter code: ATP synthase subunit delta, cyanelle (186 aa).

This sequence belongs to the ATPase delta chain family. In terms of assembly, F-type ATPases have 2 components, F(1) - the catalytic core - and F(0) - the membrane proton channel. F(1) has five subunits: alpha(3), beta(3), gamma(1), delta(1), epsilon(1). CF(0) has four main subunits: a(1), b(1), b'(1) and c(10-14). The alpha and beta chains form an alternating ring which encloses part of the gamma chain. F(1) is attached to F(0) by a central stalk formed by the gamma and epsilon chains, while a peripheral stalk is formed by the delta, b and b' chains.

It is found in the plastid. The protein resides in the cyanelle thylakoid membrane. Its function is as follows. F(1)F(0) ATP synthase produces ATP from ADP in the presence of a proton or sodium gradient. F-type ATPases consist of two structural domains, F(1) containing the extramembraneous catalytic core and F(0) containing the membrane proton channel, linked together by a central stalk and a peripheral stalk. During catalysis, ATP synthesis in the catalytic domain of F(1) is coupled via a rotary mechanism of the central stalk subunits to proton translocation. Functionally, this protein is part of the stalk that links CF(0) to CF(1). It either transmits conformational changes from CF(0) to CF(1) or is implicated in proton conduction. The sequence is that of ATP synthase subunit delta, cyanelle from Cyanophora paradoxa.